Reading from the N-terminus, the 333-residue chain is Glyceraldehyde-3-phosphate dehydrogenase (333 aa).

NAD(+)-binding positions include 11-12 (RI), Asp33, Arg78, and Ser120. Residues 149–151 (SCT), Thr180, 209–210 (TG), and Arg232 contribute to the D-glyceraldehyde 3-phosphate site. Catalysis depends on Cys150, which acts as the Nucleophile. Cys150 carries the post-translational modification S-nitrosocysteine. Position 314 (Asn314) interacts with NAD(+).

It belongs to the glyceraldehyde-3-phosphate dehydrogenase family. In terms of assembly, homotetramer. Post-translationally, S-nitrosylation of Cys-150 leads to translocation to the nucleus.

It localises to the cytoplasm. It is found in the cytosol. Its subcellular location is the cytoskeleton. The protein localises to the nucleus. It carries out the reaction D-glyceraldehyde 3-phosphate + phosphate + NAD(+) = (2R)-3-phospho-glyceroyl phosphate + NADH + H(+). The enzyme catalyses S-nitroso-L-cysteinyl-[GAPDH] + L-cysteinyl-[protein] = L-cysteinyl-[GAPDH] + S-nitroso-L-cysteinyl-[protein]. It participates in carbohydrate degradation; glycolysis; pyruvate from D-glyceraldehyde 3-phosphate: step 1/5. Has both glyceraldehyde-3-phosphate dehydrogenase and nitrosylase activities, thereby playing a role in glycolysis and nuclear functions, respectively. Glyceraldehyde-3-phosphate dehydrogenase is a key enzyme in glycolysis that catalyzes the first step of the pathway by converting D-glyceraldehyde 3-phosphate (G3P) into 3-phospho-D-glyceroyl phosphate. Participates in nuclear events including transcription, RNA transport, DNA replication and apoptosis. Nuclear functions are probably due to the nitrosylase activity that mediates cysteine S-nitrosylation of nuclear target proteins such as SIRT1, HDAC2 and PRKDC. The polypeptide is Glyceraldehyde-3-phosphate dehydrogenase (Danio rerio (Zebrafish)).